The following is a 360-amino-acid chain: Peptide chain release factor 1 (360 aa).

Position 235 is an N5-methylglutamine (glutamine 235).

The protein belongs to the prokaryotic/mitochondrial release factor family. Methylated by PrmC. Methylation increases the termination efficiency of RF1.

It is found in the cytoplasm. Its function is as follows. Peptide chain release factor 1 directs the termination of translation in response to the peptide chain termination codons UAG and UAA. This is Peptide chain release factor 1 from Paraburkholderia phymatum (strain DSM 17167 / CIP 108236 / LMG 21445 / STM815) (Burkholderia phymatum).